The primary structure comprises 592 residues: UvrABC system protein C (592 aa).

One can recognise a GIY-YIG domain in the interval 14-91 (KKPGCYLWKN…IKKHKPRYNI (78 aa)). The 36-residue stretch at 197–232 (DQVLKDLKEKESIASEKFDFEQAKKYLDLQKAINLI) folds into the UVR domain.

This sequence belongs to the UvrC family. Interacts with UvrB in an incision complex.

Its subcellular location is the cytoplasm. Its function is as follows. The UvrABC repair system catalyzes the recognition and processing of DNA lesions. UvrC both incises the 5' and 3' sides of the lesion. The N-terminal half is responsible for the 3' incision and the C-terminal half is responsible for the 5' incision. This Mycoplasmoides gallisepticum (strain R(low / passage 15 / clone 2)) (Mycoplasma gallisepticum) protein is UvrABC system protein C.